Here is a 258-residue protein sequence, read N- to C-terminus: Phosphoadenosine 5'-phosphosulfate reductase (258 aa).

Residue Cys-244 is the Nucleophile; cysteine thiosulfonate intermediate of the active site.

It belongs to the PAPS reductase family. CysH subfamily.

The protein resides in the cytoplasm. It carries out the reaction [thioredoxin]-disulfide + sulfite + adenosine 3',5'-bisphosphate + 2 H(+) = [thioredoxin]-dithiol + 3'-phosphoadenylyl sulfate. Its pathway is sulfur metabolism; hydrogen sulfide biosynthesis; sulfite from sulfate: step 3/3. In terms of biological role, catalyzes the formation of sulfite from phosphoadenosine 5'-phosphosulfate (PAPS) using thioredoxin as an electron donor. This is Phosphoadenosine 5'-phosphosulfate reductase from Vibrio atlanticus (strain LGP32) (Vibrio splendidus (strain Mel32)).